Here is a 336-residue protein sequence, read N- to C-terminus: tRNA(Ile)-lysidine synthase (336 aa).

32-37 (SGGQDS) provides a ligand contact to ATP.

It belongs to the tRNA(Ile)-lysidine synthase family.

The protein resides in the cytoplasm. The catalysed reaction is cytidine(34) in tRNA(Ile2) + L-lysine + ATP = lysidine(34) in tRNA(Ile2) + AMP + diphosphate + H(+). Its function is as follows. Ligates lysine onto the cytidine present at position 34 of the AUA codon-specific tRNA(Ile) that contains the anticodon CAU, in an ATP-dependent manner. Cytidine is converted to lysidine, thus changing the amino acid specificity of the tRNA from methionine to isoleucine. In Synechococcus sp. (strain JA-3-3Ab) (Cyanobacteria bacterium Yellowstone A-Prime), this protein is tRNA(Ile)-lysidine synthase.